We begin with the raw amino-acid sequence, 344 residues long: Ubiquitin-associated domain-containing protein 2 (344 aa).

Residues M1–F34 form the signal peptide. Over Q35–K91 the chain is Extracellular. The chain crosses the membrane as a helical span at residues F92–V111. At E112 to N123 the chain is on the cytoplasmic side. Residues S124–C142 traverse the membrane as a helical segment. The Extracellular segment spans residues S143–T162. N-linked (GlcNAc...) asparagine glycosylation is present at N160. A helical membrane pass occupies residues L163–L183. Residues S184 to H344 lie on the Cytoplasmic side of the membrane. A disordered region spans residues R284–E307. Positions N286–D296 are enriched in basic and acidic residues. Residues E304–H344 enclose the UBA domain.

It is found in the endoplasmic reticulum membrane. Functionally, restricts trafficking of FAF2 from the endoplasmic reticulum to lipid droplets. May negatively regulate the canonical Wnt signaling pathway in the lymphocytes. In Gallus gallus (Chicken), this protein is Ubiquitin-associated domain-containing protein 2 (UBAC2).